A 152-amino-acid chain; its full sequence is Putative pre-16S rRNA nuclease (152 aa).

The protein belongs to the YqgF nuclease family.

It is found in the cytoplasm. In terms of biological role, could be a nuclease involved in processing of the 5'-end of pre-16S rRNA. The protein is Putative pre-16S rRNA nuclease of Sphingopyxis alaskensis (strain DSM 13593 / LMG 18877 / RB2256) (Sphingomonas alaskensis).